A 254-amino-acid polypeptide reads, in one-letter code: 5-oxoprolinase subunit A (254 aa).

This sequence belongs to the LamB/PxpA family. As to quaternary structure, forms a complex composed of PxpA, PxpB and PxpC.

It carries out the reaction 5-oxo-L-proline + ATP + 2 H2O = L-glutamate + ADP + phosphate + H(+). Catalyzes the cleavage of 5-oxoproline to form L-glutamate coupled to the hydrolysis of ATP to ADP and inorganic phosphate. The sequence is that of 5-oxoprolinase subunit A from Gluconobacter oxydans (strain 621H) (Gluconobacter suboxydans).